A 361-amino-acid chain; its full sequence is Peptide chain release factor 1 (361 aa).

Q235 carries the N5-methylglutamine modification.

This sequence belongs to the prokaryotic/mitochondrial release factor family. Post-translationally, methylated by PrmC. Methylation increases the termination efficiency of RF1.

Its subcellular location is the cytoplasm. In terms of biological role, peptide chain release factor 1 directs the termination of translation in response to the peptide chain termination codons UAG and UAA. This is Peptide chain release factor 1 from Xanthomonas oryzae pv. oryzae (strain MAFF 311018).